Here is a 108-residue protein sequence, read N- to C-terminus: UPF0060 membrane protein CC_1976 (108 aa).

The next 4 helical transmembrane spans lie at 4–24 (FAIYVLAALAEIAGCFGFWAW), 27–47 (LGKSPAWAVLGVLSLVIFALL), 59–79 (AFAAYGGVYIIASLAWMQVVE), and 85–105 (RWDLIGGVICLAGAALILFGP).

This sequence belongs to the UPF0060 family.

The protein resides in the cell inner membrane. The chain is UPF0060 membrane protein CC_1976 from Caulobacter vibrioides (strain ATCC 19089 / CIP 103742 / CB 15) (Caulobacter crescentus).